Consider the following 667-residue polypeptide: Endogenous retrovirus group K member 5 Gag polyprotein (667 aa).

Gly2 is lipidated: N-myristoyl glycine. A disordered region spans residues 166 to 188; it reads KGPELVGPSESKPRGPSPLPAGQ. 2 consecutive CCHC-type zinc fingers follow at residues 543–560 and 580–597; these read KKCYNCGQIGHLKRSCPV and GLCPKCGKGKHWANQCHS. The disordered stretch occupies residues 598–667; the sequence is KFDKDGQPLS…CPAPQQAAPQ (70 aa). Positions 648 to 667 are enriched in polar residues; that stretch reads GVSQLQQSNSCPAPQQAAPQ.

It belongs to the beta type-B retroviral Gag protein family. HERV class-II K(HML-2) gag subfamily. In terms of processing, myristoylation is essential for retroviral assembly. Alteration of the glycine residue leads to a block in the budding of particles and an accumulation of Gag inside the cell. Post-translationally, specific enzymatic cleavages may yield mature proteins.

It localises to the cell membrane. Functionally, the products of the Gag polyproteins of infectious retroviruses perform highly complex orchestrated tasks during the assembly, budding, maturation, and infection stages of the viral replication cycle. During viral assembly, the proteins form membrane associations and self-associations that ultimately result in budding of an immature virion from the infected cell. Gag precursors also function during viral assembly to selectively bind and package two plus strands of genomic RNA. Endogenous Gag proteins may have kept, lost or modified their original function during evolution. This Homo sapiens (Human) protein is Endogenous retrovirus group K member 5 Gag polyprotein (ERVK-5).